Here is a 301-residue protein sequence, read N- to C-terminus: Ribosomal RNA small subunit methyltransferase A (301 aa).

S-adenosyl-L-methionine-binding residues include Asn23, Ile25, Gly50, Glu72, Asp97, and Asn149.

This sequence belongs to the class I-like SAM-binding methyltransferase superfamily. rRNA adenine N(6)-methyltransferase family. RsmA subfamily.

The protein resides in the cytoplasm. The catalysed reaction is adenosine(1518)/adenosine(1519) in 16S rRNA + 4 S-adenosyl-L-methionine = N(6)-dimethyladenosine(1518)/N(6)-dimethyladenosine(1519) in 16S rRNA + 4 S-adenosyl-L-homocysteine + 4 H(+). In terms of biological role, specifically dimethylates two adjacent adenosines (A1518 and A1519) in the loop of a conserved hairpin near the 3'-end of 16S rRNA in the 30S particle. May play a critical role in biogenesis of 30S subunits. The protein is Ribosomal RNA small subunit methyltransferase A of Rickettsia peacockii (strain Rustic).